The chain runs to 120 residues: Large ribosomal subunit protein bL17 (120 aa).

Belongs to the bacterial ribosomal protein bL17 family. Part of the 50S ribosomal subunit. Contacts protein L32.

The sequence is that of Large ribosomal subunit protein bL17 from Mycoplasmopsis synoviae (strain 53) (Mycoplasma synoviae).